A 109-amino-acid chain; its full sequence is MRLSTATLLLLLASCLSPGHGILEAHYTNLKCRCSGVISTVVGLNIIDRIQVTPPGNGCPKTEVVIWTKMKKVICVNPRAKWLQRLLRHVQSKSLSSTPQAPVSKRRAA.

Residues 1–21 (MRLSTATLLLLLASCLSPGHG) form the signal peptide. Intrachain disulfides connect Cys32–Cys59 and Cys34–Cys75.

The protein belongs to the intercrine alpha (chemokine CxC) family. In terms of tissue distribution, found in spleen (B-cell-rich zone or follicles), Peyer patches (strongest within germinal centers and extending to the mantle zone) and lymph nodes (in reticular pattern in follicles).

Its subcellular location is the secreted. Functionally, strongly chemotactic for B-lymphocytes, weakly for spleen monocytes and macrophages but no chemotactic activity for granulocytes. Binds to BLR1/CXCR5. May play a role in directing the migration of B-lymphocytes to follicles in secondary lymphoid organs. The sequence is that of C-X-C motif chemokine 13 (Cxcl13) from Mus musculus (Mouse).